A 166-amino-acid chain; its full sequence is Phosphopantetheine adenylyltransferase (166 aa).

Residue Ser-9 participates in substrate binding. ATP-binding positions include 9–10 (SF) and His-17. Positions 41, 74, and 88 each coordinate substrate. Residues 89–91 (GLR), Glu-99, and 123–129 (YVHLSST) each bind ATP.

It belongs to the bacterial CoaD family. In terms of assembly, homohexamer. The cofactor is Mg(2+).

It localises to the cytoplasm. The catalysed reaction is (R)-4'-phosphopantetheine + ATP + H(+) = 3'-dephospho-CoA + diphosphate. It functions in the pathway cofactor biosynthesis; coenzyme A biosynthesis; CoA from (R)-pantothenate: step 4/5. Reversibly transfers an adenylyl group from ATP to 4'-phosphopantetheine, yielding dephospho-CoA (dPCoA) and pyrophosphate. The chain is Phosphopantetheine adenylyltransferase from Paenarthrobacter aurescens (strain TC1).